We begin with the raw amino-acid sequence, 208 residues long: Imidazoleglycerol-phosphate dehydratase (208 aa).

Belongs to the imidazoleglycerol-phosphate dehydratase family.

It localises to the cytoplasm. It carries out the reaction D-erythro-1-(imidazol-4-yl)glycerol 3-phosphate = 3-(imidazol-4-yl)-2-oxopropyl phosphate + H2O. The protein operates within amino-acid biosynthesis; L-histidine biosynthesis; L-histidine from 5-phospho-alpha-D-ribose 1-diphosphate: step 6/9. The sequence is that of Imidazoleglycerol-phosphate dehydratase from Arthrobacter sp. (strain FB24).